The primary structure comprises 689 residues: Glycine--tRNA ligase beta subunit (689 aa).

The protein belongs to the class-II aminoacyl-tRNA synthetase family. As to quaternary structure, tetramer of two alpha and two beta subunits.

The protein localises to the cytoplasm. The catalysed reaction is tRNA(Gly) + glycine + ATP = glycyl-tRNA(Gly) + AMP + diphosphate. This chain is Glycine--tRNA ligase beta subunit, found in Shewanella woodyi (strain ATCC 51908 / MS32).